We begin with the raw amino-acid sequence, 322 residues long: Beta-ketoacyl-[acyl-carrier-protein] synthase III (322 aa).

Residues Cys-113 and His-249 contribute to the active site. The interval 250 to 254 is ACP-binding; that stretch reads QANLR. The active site involves Asn-279.

This sequence belongs to the thiolase-like superfamily. FabH family. In terms of assembly, homodimer.

It is found in the cytoplasm. The catalysed reaction is malonyl-[ACP] + acetyl-CoA + H(+) = 3-oxobutanoyl-[ACP] + CO2 + CoA. It functions in the pathway lipid metabolism; fatty acid biosynthesis. Functionally, catalyzes the condensation reaction of fatty acid synthesis by the addition to an acyl acceptor of two carbons from malonyl-ACP. Catalyzes the first condensation reaction which initiates fatty acid synthesis and may therefore play a role in governing the total rate of fatty acid production. Possesses both acetoacetyl-ACP synthase and acetyl transacylase activities. Its substrate specificity determines the biosynthesis of branched-chain and/or straight-chain of fatty acids. The sequence is that of Beta-ketoacyl-[acyl-carrier-protein] synthase III from Marinobacter nauticus (strain ATCC 700491 / DSM 11845 / VT8) (Marinobacter aquaeolei).